Here is a 214-residue protein sequence, read N- to C-terminus: Transcriptional regulatory protein ComA (214 aa).

The region spanning 3–121 (KILVIDDHPA…KITQYIYHVL (119 aa)) is the Response regulatory domain. 4-aspartylphosphate is present on Asp-55. The HTH luxR-type domain occupies 147–212 (SQKEQDVLTP…EAVLIAKSDG (66 aa)). Positions 171–190 (NQEIADALHLSKRSIEYSLT) form a DNA-binding region, H-T-H motif.

In terms of processing, phosphorylated by ComP.

It localises to the cytoplasm. Functionally, response regulator in the two-component regulatory system ComP/ComA involved in a major quorum response pathway that regulates the development of genetic competence. Regulates directly the expression of over 20 genes, including genes of the srfA operon, degQ, rapA, rapC, rapE, rapF, etc. Regulates indirectly, through the regulation of comK transcription, the expression of late competence genes. This chain is Transcriptional regulatory protein ComA (comA), found in Bacillus subtilis (strain 168).